Here is a 325-residue protein sequence, read N- to C-terminus: GMP reductase (325 aa).

Cys173 functions as the Thioimidate intermediate in the catalytic mechanism. Residue 202–225 (IIADGGIRSHGDIAKSVRFGATMV) coordinates NADP(+).

The protein belongs to the IMPDH/GMPR family. GuaC type 2 subfamily.

The catalysed reaction is IMP + NH4(+) + NADP(+) = GMP + NADPH + 2 H(+). Its function is as follows. Catalyzes the irreversible NADPH-dependent deamination of GMP to IMP. It functions in the conversion of nucleobase, nucleoside and nucleotide derivatives of G to A nucleotides, and in maintaining the intracellular balance of A and G nucleotides. This Delftia acidovorans (strain DSM 14801 / SPH-1) protein is GMP reductase.